The sequence spans 62 residues: MATATAKVIYDSGFKNIWIYGIDNEELEQLSQGKNLKYFPSSTQIPHFNTSNNLEQILNNVA.

This is an uncharacterized protein from Mesomycoplasma hyorhinis (Mycoplasma hyorhinis).